Reading from the N-terminus, the 214-residue chain is uncharacterized protein (214 aa).

The first 24 residues, 1-24 (MVTPHGILLLTITAAASLLWITFA), serve as a signal peptide directing secretion. Residues 99–121 (APNDTQEQNSTRNKRDSESYTAT) are disordered. The span at 100-109 (PNDTQEQNST) shows a compositional bias: polar residues.

In terms of tissue distribution, component of the acid-insoluble and acid-soluble organic matrix of the aragonitic skeleton (at protein level).

The protein localises to the secreted. This is an uncharacterized protein from Acropora millepora (Staghorn coral).